A 700-amino-acid chain; its full sequence is Calpain-2 catalytic subunit (700 aa).

Positions 2 to 19 are cleaved as a propeptide — anchors to the small subunit; that stretch reads AGMAAALAKERAAAAGAG. The region spanning 45 to 344 is the Calpain catalytic domain; that stretch reads LFHDPSFPAG…YSRLEICNLT (300 aa). Ca(2+) contacts are provided by glycine 91 and aspartate 96. Cysteine 105 is a catalytic residue. Ca(2+) contacts are provided by glutamate 175, glutamine 229, and lysine 230. Catalysis depends on residues histidine 262 and asparagine 286. Residues glutamate 292, aspartate 299, and glutamate 323 each coordinate Ca(2+). Positions 345 to 514 are domain III; it reads PDTLASDRYK…KNANSTVIDD (170 aa). The linker stretch occupies residues 515 to 529; that stretch reads EIEANFEETEIDEDD. Residues 530–700 form a domain IV region; the sequence is IEPSFKKLFG…LINWLFFTVI (171 aa). The Ca(2+) site is built by alanine 542, aspartate 545, glutamate 547, glutamate 552, aspartate 585, aspartate 587, serine 589, lysine 591, glutamate 596, aspartate 615, aspartate 617, serine 619, threonine 621, glutamate 626, aspartate 658, and asparagine 661. EF-hand domains lie at 572 to 605 and 602 to 637; these read FSIETCKIMVDLLDNDGSGKLGLKEFHTLWTKIQ and TKIQKYQKIYREIDVDRSGTMNSYEMRRALEAAGFK. Residues 667–700 form the EF-hand 3 domain; it reads IRLETLYKMFRKLDTEKTGTIELNLINWLFFTVI.

Belongs to the peptidase C2 family. Forms a heterodimer with a small (regulatory) subunit (CAPNS1). It depends on Ca(2+) as a cofactor. As to expression, ubiquitous.

The protein resides in the cytoplasm. It localises to the cell membrane. It carries out the reaction Broad endopeptidase specificity.. Activated by 200-1000 micromolar concentrations of calcium and inhibited by calpastatin. Its function is as follows. Calcium-regulated non-lysosomal thiol-protease which catalyze limited proteolysis of substrates involved in cytoskeletal remodeling and signal transduction. The chain is Calpain-2 catalytic subunit (CAPN2) from Gallus gallus (Chicken).